We begin with the raw amino-acid sequence, 266 residues long: Apoptosis regulator ced-9 (266 aa).

The tract at residues 1-58 is disordered; sequence MVDSMDMANSSQNTFRRRTMATSEMREFLSTKDAEPNNFGMQTIPESPTPSTPTRRMS. The segment covering 24–35 has biased composition (basic and acidic residues); the sequence is EMREFLSTKDAE. The BH4 signature appears at 75–94; the sequence is IQGFVVDYFTYRIAQNGLDW. A BH1 motif is present at residues 156–174; that stretch reads NTPCPMSYGRLIGLISFGG. A BH2 motif is present at residues 208 to 223; the sequence is SWKEHNRSWADFMKLG.

This sequence belongs to the Bcl-2 family. As to quaternary structure, interacts with asymmetric homodimer ced-4; the interaction sequesters ced-4. Interacts with egl-1; the interaction results in ced-4 release. Interacts with dre-1; the interaction inhibits ced-9 activity, either directly or indirectly. Interacts with dct-1. May form a complex composed of ced-9, ced-4 and mac-1.

Its subcellular location is the perikaryon. It localises to the synapse. The protein localises to the endomembrane system. The protein resides in the mitochondrion membrane. Its function is as follows. Plays a major role in programmed cell death (PCD, apoptosis). egl-1 binds to and directly inhibits the activity of ced-9, releasing the cell death activator ced-4 from a ced-9/ced-4 containing protein complex and allowing ced-4 to activate the cell-killing caspase ced-3. During larval development, required for the elimination of transient presynaptic components downstream of egl-1 and upstream of ced-4 and ced-3 apoptotic pathway. The chain is Apoptosis regulator ced-9 (ced-9) from Caenorhabditis briggsae.